We begin with the raw amino-acid sequence, 64 residues long: Large ribosomal subunit protein bL33 (64 aa).

This sequence belongs to the bacterial ribosomal protein bL33 family.

The chain is Large ribosomal subunit protein bL33 from Synechococcus sp. (strain WH7803).